Here is a 60-residue protein sequence, read N- to C-terminus: Large ribosomal subunit protein bL32 (60 aa).

Residues 1-60 (MAVQQNKKSRSARDMRRSHDALESNALSVEKSTGEVHLRHHVSPDGFYRGRKVVDKGSDE) form a disordered region. A compositionally biased stretch (basic and acidic residues) spans 11 to 22 (SARDMRRSHDAL).

This sequence belongs to the bacterial ribosomal protein bL32 family.

The polypeptide is Large ribosomal subunit protein bL32 (Pseudomonas aeruginosa (strain LESB58)).